The sequence spans 65 residues: Conotoxin tx3c (65 aa).

Positions 1-19 (MFKLGVLLTICLLLFSLNA) are cleaved as a signal peptide. Residues 20-50 (VPLDGDQPADQPAERLLDDISFENNPFYDPA) constitute a propeptide that is removed on maturation. Intrachain disulfides connect cysteine 53–cysteine 64, cysteine 54–cysteine 60, and cysteine 57–cysteine 63. Proline 62 carries the post-translational modification 4-hydroxyproline; partial. At cysteine 64 the chain carries Cysteine amide.

The hydroxylation at Pro-62 is observed in PubMed:15924437, PubMed:19380747 and PubMed:22709442, and the non-hydroxylation is described in PubMed:22709442. In terms of tissue distribution, expressed by the venom duct.

It localises to the secreted. Causes scratching in mice. In Conus textile (Cloth-of-gold cone), this protein is Conotoxin tx3c.